The following is a 61-amino-acid chain: UPF0434 protein PA14_25520 (61 aa).

It belongs to the UPF0434 family.

The protein is UPF0434 protein PA14_25520 of Pseudomonas aeruginosa (strain UCBPP-PA14).